The following is a 549-amino-acid chain: Chaperonin GroEL (549 aa).

ATP-binding positions include 30-33 (TLGP), K51, 87-91 (DGTTT), G415, and D495.

This sequence belongs to the chaperonin (HSP60) family. In terms of assembly, forms a cylinder of 14 subunits composed of two heptameric rings stacked back-to-back. Interacts with the co-chaperonin GroES.

Its subcellular location is the cytoplasm. It catalyses the reaction ATP + H2O + a folded polypeptide = ADP + phosphate + an unfolded polypeptide.. Its function is as follows. Together with its co-chaperonin GroES, plays an essential role in assisting protein folding. The GroEL-GroES system forms a nano-cage that allows encapsulation of the non-native substrate proteins and provides a physical environment optimized to promote and accelerate protein folding. The polypeptide is Chaperonin GroEL (Hahella chejuensis (strain KCTC 2396)).